Here is a 364-residue protein sequence, read N- to C-terminus: Aspartate aminotransferase (364 aa).

The L-aspartate site is built by Gly-23, Trp-99, and Asn-143. Lys-200 carries the N6-(pyridoxal phosphate)lysine modification. Arg-320 serves as a coordination point for L-aspartate.

Belongs to the class-I pyridoxal-phosphate-dependent aminotransferase family. In terms of assembly, homodimer. Pyridoxal 5'-phosphate serves as cofactor.

The protein resides in the cytoplasm. The catalysed reaction is L-aspartate + 2-oxoglutarate = oxaloacetate + L-glutamate. This is Aspartate aminotransferase (aspC) from Thermococcus kodakarensis (strain ATCC BAA-918 / JCM 12380 / KOD1) (Pyrococcus kodakaraensis (strain KOD1)).